The chain runs to 916 residues: RNA-directed DNA polymerase from mobile element jockey (916 aa).

Residues 483–757 form the Reverse transcriptase domain; sequence SILRVGYFPK…HEYKYLGVIL (275 aa). The segment at 890 to 916 is disordered; the sequence is RSASPRSRVRRRLKRHHPQDLLDRALT. The segment covering 896 to 906 has biased composition (basic residues); sequence SRVRRRLKRHH. Residues 907–916 are compositionally biased toward basic and acidic residues; sequence PQDLLDRALT.

Mg(2+) serves as cofactor. Requires Mn(2+) as cofactor.

It carries out the reaction DNA(n) + a 2'-deoxyribonucleoside 5'-triphosphate = DNA(n+1) + diphosphate. Inactivated by sulphydryl reagent. This chain is RNA-directed DNA polymerase from mobile element jockey (jockey\pol), found in Drosophila funebris (Fruit fly).